The primary structure comprises 100 residues: Putative pterin-4-alpha-carbinolamine dehydratase 2 (100 aa).

The protein belongs to the pterin-4-alpha-carbinolamine dehydratase family.

The enzyme catalyses (4aS,6R)-4a-hydroxy-L-erythro-5,6,7,8-tetrahydrobiopterin = (6R)-L-erythro-6,7-dihydrobiopterin + H2O. The chain is Putative pterin-4-alpha-carbinolamine dehydratase 2 from Cupriavidus pinatubonensis (strain JMP 134 / LMG 1197) (Cupriavidus necator (strain JMP 134)).